The sequence spans 333 residues: Taste receptor type 2 member 38 (333 aa).

At 1-17 (MLTLTRICAVSYEVRST) the chain is on the extracellular side. Residues 18-38 (FLFISVLEFAVGFLTNAFIFL) form a helical membrane-spanning segment. Residues 39–55 (VNFWDVVKRQPLSNSDC) are Cytoplasmic-facing. The chain crosses the membrane as a helical span at residues 56 to 76 (VLLCLSISRLFLHGLLFLSAI). Residues 77–94 (QLTHFQKLSEPLNHSYQA) are Extracellular-facing. Residues 95–115 (IIMLWIIANQANLWLAACLSL) traverse the membrane as a helical segment. The Cytoplasmic portion of the chain corresponds to 116-142 (LYCSKLIRFSHTFLICLASWVSRKISQ). The helical transmembrane segment at 143-163 (MLLGIILCSCICTVLCVWCFF) threads the bilayer. Over 164 to 190 (SRPHFTVTTFLFMNNNTRLNWQIKDLN) the chain is Extracellular. The N-linked (GlcNAc...) asparagine glycan is linked to Asn178. The helical transmembrane segment at 191–211 (LFYSFLFCYLWSVPPFLLFLV) threads the bilayer. At 212-251 (SSGMLTVSLGRHMRTMKVYTRDSRDPSLEAHIKALKSLVS) the chain is on the cytoplasmic side. A helical transmembrane segment spans residues 252-272 (FFCFFVISSCAAFISVPLLIL). Over 273-276 (WRNK) the chain is Extracellular. A helical membrane pass occupies residues 277-297 (IGVMVCVGIMAACPSGHAAVL). The Cytoplasmic segment spans residues 298–333 (ISGNATLRRAVTTILLWAQSSMKVRADHKADSRTLC).

Belongs to the G-protein coupled receptor T2R family.

It localises to the membrane. Its function is as follows. Receptor that may play a role in the perception of bitterness and is gustducin-linked. May play a role in sensing the chemical composition of the gastrointestinal content. The activity of this receptor may stimulate alpha gustducin, mediate PLC-beta-2 activation and lead to the gating of TRPM5. This is Taste receptor type 2 member 38 (TAS2R38) from Pongo pygmaeus (Bornean orangutan).